The sequence spans 243 residues: Carboxy-S-adenosyl-L-methionine synthase (243 aa).

Residues Tyr40, 65–67 (GCS), 90–91 (DN), 118–119 (DI), Asn133, and Arg200 each bind S-adenosyl-L-methionine.

This sequence belongs to the class I-like SAM-binding methyltransferase superfamily. Cx-SAM synthase family. As to quaternary structure, homodimer.

It catalyses the reaction prephenate + S-adenosyl-L-methionine = carboxy-S-adenosyl-L-methionine + 3-phenylpyruvate + H2O. In terms of biological role, catalyzes the conversion of S-adenosyl-L-methionine (SAM) to carboxy-S-adenosyl-L-methionine (Cx-SAM). The polypeptide is Carboxy-S-adenosyl-L-methionine synthase (Shewanella putrefaciens (strain CN-32 / ATCC BAA-453)).